The sequence spans 388 residues: GTPase Obg (388 aa).

In terms of domain architecture, Obg spans 4-162 (SNFVDYVKIY…MTVIMELKLL (159 aa)). Residues 163–329 (ADVGLVGFPN…LKDILWEELN (167 aa)) enclose the OBG-type G domain. Residues 169 to 176 (GFPNAGKS), 194 to 198 (FTTLE), 216 to 219 (DIPG), 283 to 286 (TKSD), and 310 to 312 (SSV) each bind GTP. Mg(2+)-binding residues include S176 and T196. The disordered stretch occupies residues 352 to 388 (LKDMGEDEELDYEYEEDADDEDDDLDYEYEEEDWEEK). Residues 356–388 (GEDEELDYEYEEDADDEDDDLDYEYEEEDWEEK) show a composition bias toward acidic residues.

The protein belongs to the TRAFAC class OBG-HflX-like GTPase superfamily. OBG GTPase family. As to quaternary structure, monomer. It depends on Mg(2+) as a cofactor.

The protein localises to the cytoplasm. An essential GTPase which binds GTP, GDP and possibly (p)ppGpp with moderate affinity, with high nucleotide exchange rates and a fairly low GTP hydrolysis rate. Plays a role in control of the cell cycle, stress response, ribosome biogenesis and in those bacteria that undergo differentiation, in morphogenesis control. This is GTPase Obg from Bacteroides thetaiotaomicron (strain ATCC 29148 / DSM 2079 / JCM 5827 / CCUG 10774 / NCTC 10582 / VPI-5482 / E50).